The sequence spans 287 residues: Large ribosomal subunit protein uL2 (287 aa).

2 disordered regions span residues 1–30 and 211–287; these read MGIR…DQPE and NRWK…GRQS. Polar residues predominate over residues 12 to 22; it reads GTRQKSVSDFS. Basic residues-rich tracts occupy residues 211-220 and 258-287; these read NRWKGRRPKV and KTRK…GRQS.

This sequence belongs to the universal ribosomal protein uL2 family. Part of the 50S ribosomal subunit. Forms a bridge to the 30S subunit in the 70S ribosome.

Functionally, one of the primary rRNA binding proteins. Required for association of the 30S and 50S subunits to form the 70S ribosome, for tRNA binding and peptide bond formation. It has been suggested to have peptidyltransferase activity; this is somewhat controversial. Makes several contacts with the 16S rRNA in the 70S ribosome. The sequence is that of Large ribosomal subunit protein uL2 from Cyanothece sp. (strain PCC 7425 / ATCC 29141).